The primary structure comprises 186 residues: Nicotinamide-nucleotide adenylyltransferase (186 aa).

It belongs to the archaeal NMN adenylyltransferase family.

It localises to the cytoplasm. It carries out the reaction beta-nicotinamide D-ribonucleotide + ATP + H(+) = diphosphate + NAD(+). The protein operates within cofactor biosynthesis; NAD(+) biosynthesis; NAD(+) from nicotinamide D-ribonucleotide: step 1/1. The sequence is that of Nicotinamide-nucleotide adenylyltransferase from Pyrococcus horikoshii (strain ATCC 700860 / DSM 12428 / JCM 9974 / NBRC 100139 / OT-3).